A 432-amino-acid chain; its full sequence is Glutamate-1-semialdehyde 2,1-aminomutase (432 aa).

Position 272 is an N6-(pyridoxal phosphate)lysine (Lys272).

This sequence belongs to the class-III pyridoxal-phosphate-dependent aminotransferase family. HemL subfamily. In terms of assembly, homodimer. Pyridoxal 5'-phosphate is required as a cofactor.

It is found in the cytoplasm. It catalyses the reaction (S)-4-amino-5-oxopentanoate = 5-aminolevulinate. It participates in porphyrin-containing compound metabolism; protoporphyrin-IX biosynthesis; 5-aminolevulinate from L-glutamyl-tRNA(Glu): step 2/2. The protein operates within porphyrin-containing compound metabolism; chlorophyll biosynthesis. This is Glutamate-1-semialdehyde 2,1-aminomutase from Trichodesmium erythraeum (strain IMS101).